Here is an 857-residue protein sequence, read N- to C-terminus: Leucine--tRNA ligase (857 aa).

The 'HIGH' region signature appears at 42 to 52; sequence PYPSGRLHMGH. Residues 617 to 621 carry the 'KMSKS' region motif; it reads KMSKS. Lysine 620 is a binding site for ATP.

This sequence belongs to the class-I aminoacyl-tRNA synthetase family.

The protein localises to the cytoplasm. The enzyme catalyses tRNA(Leu) + L-leucine + ATP = L-leucyl-tRNA(Leu) + AMP + diphosphate. The protein is Leucine--tRNA ligase of Vibrio parahaemolyticus serotype O3:K6 (strain RIMD 2210633).